A 924-amino-acid chain; its full sequence is DNA repair and recombination protein RDH54 (924 aa).

Positions 1–10 (MQIPKYENKP) are enriched in basic and acidic residues. Disordered stretches follow at residues 1 to 21 (MQIP…GSNK) and 155 to 183 (EALS…NDGG). Over residues 168–178 (TTSTTETVPST) the composition is skewed to low complexity. The Helicase ATP-binding domain maps to 299–487 (LENDSDISGC…FTIIDFINPG (189 aa)). ATP is bound at residue 346–353 (IPLTGLCK). Positions 472–475 (NDLN) match the DEGH box motif. A Glycyl lysine isopeptide (Lys-Gly) (interchain with G-Cter in ubiquitin) cross-link involves residue lysine 615. In terms of domain architecture, Helicase C-terminal spans 631–790 (KLRVLMTLLE…DSEMRNKESS (160 aa)).

This sequence belongs to the SNF2/RAD54 helicase family. Interacts with RAD51 and DMC1.

Its subcellular location is the nucleus. The enzyme catalyses ATP + H2O = ADP + phosphate + H(+). Functionally, involved in the recombinational repair of double-strand breaks (DSB) in DNA during mitosis and meiosis. Has DNA dependent ATPase activity. Promotes D-loop (displacement loop) formation with RAD51 recombinase. Modifies the topology of double-stranded DNA during the D-loop reaction to facilitate the invasion of the homologous duplex molecule by the initiating single-stranded DNA substrate. Required for adaptation from G2/M checkpoint arrest induced by a double strand break, by participating in monitoring the extent of single-stranded DNA produced by resection of DNA ends. This role is distinct from its roles in recombination. Promotes colocalization of RAD51 and DMC1 during meiotic recombination. Involved in crossover interference. The protein is DNA repair and recombination protein RDH54 (RDH54) of Saccharomyces cerevisiae (strain YJM789) (Baker's yeast).